We begin with the raw amino-acid sequence, 275 residues long: Aliphatic sulfonates import ATP-binding protein SsuB 1 (275 aa).

One can recognise an ABC transporter domain in the interval 34–260 (ISLTGLEKSF…RHGHPGLCEL (227 aa)). ATP is bound at residue 66–73 (GKSGCGKS).

This sequence belongs to the ABC transporter superfamily. Aliphatic sulfonates importer (TC 3.A.1.17.2) family. As to quaternary structure, the complex is composed of two ATP-binding proteins (SsuB), two transmembrane proteins (SsuC) and a solute-binding protein (SsuA).

It localises to the cell inner membrane. The catalysed reaction is ATP + H2O + aliphatic sulfonate-[sulfonate-binding protein]Side 1 = ADP + phosphate + aliphatic sulfonateSide 2 + [sulfonate-binding protein]Side 1.. Functionally, part of the ABC transporter complex SsuABC involved in aliphatic sulfonates import. Responsible for energy coupling to the transport system. In Rhizobium johnstonii (strain DSM 114642 / LMG 32736 / 3841) (Rhizobium leguminosarum bv. viciae), this protein is Aliphatic sulfonates import ATP-binding protein SsuB 1.